Here is a 166-residue protein sequence, read N- to C-terminus: Urocortin-3 (166 aa).

Positions 1–23 (MLVPAPFLLVLLLLLGAPQVGLS) are cleaved as a signal peptide. Residues 24 to 123 (QRSPKAGSSP…QDKAKSDRRT (100 aa)) constitute a propeptide that is removed on maturation. The segment covering 41-51 (REAEKSQRKDT) has biased composition (basic and acidic residues). A disordered region spans residues 41–123 (REAEKSQRKD…QDKAKSDRRT (83 aa)). The span at 68–77 (EDQEGQEEED) shows a compositional bias: acidic residues. A compositionally biased stretch (gly residues) spans 86–96 (SVGGGGGGGAG). Residues 113 to 123 (SQDKAKSDRRT) show a composition bias toward basic and acidic residues. I162 is subject to Isoleucine amide.

Belongs to the sauvagine/corticotropin-releasing factor/urotensin I family. As to quaternary structure, binds with high affinity to CRF receptors 2-alpha and 2-beta.

It localises to the secreted. Its function is as follows. Suppresses food intake, delays gastric emptying and decreases heat-induced edema. Might represent an endogenous ligand for maintaining homeostasis after stress. The protein is Urocortin-3 (UCN3) of Bos taurus (Bovine).